The sequence spans 296 residues: Light-independent protochlorophyllide reductase iron-sulfur ATP-binding protein (296 aa).

ATP is bound by residues 39–44 and Lys68; that span reads GIGKST. Residue Ser43 participates in Mg(2+) binding. [4Fe-4S] cluster contacts are provided by Cys124 and Cys158. 209-210 provides a ligand contact to ATP; it reads NR.

This sequence belongs to the NifH/BchL/ChlL family. As to quaternary structure, homodimer. Protochlorophyllide reductase is composed of three subunits; ChlL, ChlN and ChlB. [4Fe-4S] cluster is required as a cofactor.

The enzyme catalyses chlorophyllide a + oxidized 2[4Fe-4S]-[ferredoxin] + 2 ADP + 2 phosphate = protochlorophyllide a + reduced 2[4Fe-4S]-[ferredoxin] + 2 ATP + 2 H2O. It participates in porphyrin-containing compound metabolism; chlorophyll biosynthesis (light-independent). Its function is as follows. Component of the dark-operative protochlorophyllide reductase (DPOR) that uses Mg-ATP and reduced ferredoxin to reduce ring D of protochlorophyllide (Pchlide) to form chlorophyllide a (Chlide). This reaction is light-independent. The L component serves as a unique electron donor to the NB-component of the complex, and binds Mg-ATP. This is Light-independent protochlorophyllide reductase iron-sulfur ATP-binding protein from Prochlorococcus marinus (strain MIT 9211).